Consider the following 100-residue polypeptide: UPF0213 protein YhbQ (100 aa).

The 76-residue stretch at 2–77 folds into the GIY-YIG domain; that stretch reads TPWFLYLIRT…KQLTKRQKER (76 aa).

This sequence belongs to the UPF0213 family.

This chain is UPF0213 protein YhbQ, found in Escherichia coli O127:H6 (strain E2348/69 / EPEC).